The primary structure comprises 880 residues: Dynamin-like protein A (880 aa).

Positions 1 to 124 (MSVFKKKDKS…QVELERKRRD (124 aa)) are disordered. Residues 8-20 (DKSDDKKKKHDEE) show a composition bias toward basic and acidic residues. Residues 22-31 (PQGTFQPASQ) are compositionally biased toward polar residues. The span at 32 to 68 (STSNTNLNSLASSVNNGASVGSTNGSTPNNSNGSTPT) shows a compositional bias: low complexity. Residues 69–152 (YNHNNSAEEL…NEQVEISSLE (84 aa)) are a coiled coil. Basic and acidic residues-rich tracts occupy residues 77 to 94 (ELEK…KSEL) and 103 to 124 (KKKE…KRRD). The 288-residue stretch at 191 to 478 (AVSHPEIVFV…VWKSYQDTIP (288 aa)) folds into the Dynamin-type G domain. The tract at residues 201–208 (GPRSSGKS) is G1 motif. GTP is bound at residue 201–208 (GPRSSGKS). The G2 motif stretch occupies residues 227–240 (IVGVGGSNANGCSK). The tract at residues 315–318 (DSPG) is G3 motif. GTP contacts are provided by residues 315–319 (DSPGL) and 380–383 (TKFH). Residues 380 to 383 (TKFH) form a G4 motif region. The interval 413–416 (LPNH) is G5 motif. A coiled-coil region spans residues 479–509 (RILKHLRSKRQTAEATLNELQKQSSSLDSTK). The span at 532-543 (TSEGNPSANGQT) shows a compositional bias: polar residues. The interval 532–551 (TSEGNPSANGQTLDEEKSQQ) is disordered. Residues 824–861 (SNEQLEQLFEVQATREQLKQEEKKQQQILEKYSQIDEQ) are a coiled coil.

Belongs to the TRAFAC class dynamin-like GTPase superfamily. Dynamin/Fzo/YdjA family.

The protein resides in the cytoplasm. It is found in the cleavage furrow. The enzyme catalyses GTP + H2O = GDP + phosphate + H(+). In terms of biological role, involved in cytokinesis. May hydrolyze GTP. The polypeptide is Dynamin-like protein A (dlpA) (Dictyostelium discoideum (Social amoeba)).